Reading from the N-terminus, the 860-residue chain is Leucine--tRNA ligase (860 aa).

The 'HIGH' region signature appears at 42-52 (PYPSGRLHMGH). Residues 619 to 623 (KMSKS) carry the 'KMSKS' region motif. Lys622 serves as a coordination point for ATP.

It belongs to the class-I aminoacyl-tRNA synthetase family.

It localises to the cytoplasm. The catalysed reaction is tRNA(Leu) + L-leucine + ATP = L-leucyl-tRNA(Leu) + AMP + diphosphate. This Yersinia enterocolitica serotype O:8 / biotype 1B (strain NCTC 13174 / 8081) protein is Leucine--tRNA ligase.